Consider the following 237-residue polypeptide: MRPSNRTPAQTRPITITRQFTAHAEGSVLVEFGETKVLCTASFTEGVPRFLKGQGQGWVTAEYGMLPRSTHSRMDREAARGKQSGRTQEIQRLIGRALRACVDMKALGENTIVIDCDVIQADGGTRTASITGACVALVDALNWARGKGIIKSNPLKFLIAAVSVGIYNGEAISDLEYVEDSAAETDMNVVMTETGKIIEIQGTAEGEPFSHEELIELLGLAKNSIREIVDVQKAALN.

Phosphate contacts are provided by residues arginine 86 and 124–126 (GTR).

It belongs to the RNase PH family. In terms of assembly, homohexameric ring arranged as a trimer of dimers.

It catalyses the reaction tRNA(n+1) + phosphate = tRNA(n) + a ribonucleoside 5'-diphosphate. Functionally, phosphorolytic 3'-5' exoribonuclease that plays an important role in tRNA 3'-end maturation. Removes nucleotide residues following the 3'-CCA terminus of tRNAs; can also add nucleotides to the ends of RNA molecules by using nucleoside diphosphates as substrates, but this may not be physiologically important. Probably plays a role in initiation of 16S rRNA degradation (leading to ribosome degradation) during starvation. The protein is Ribonuclease PH of Shewanella sp. (strain ANA-3).